Consider the following 156-residue polypeptide: Transcription factor E (156 aa).

The region spanning 1–72 is the HTH TFE/IIEalpha-type domain; it reads MYGEKAKKVL…LWILNIDQIE (72 aa).

It belongs to the TFE family. In terms of assembly, monomer. Interaction with RNA polymerase subunits RpoF and RpoE is necessary for Tfe stimulatory transcription activity. Able to interact with Tbp and RNA polymerase in the absence of DNA promoter. Interacts both with the preinitiation and elongation complexes.

Functionally, transcription factor that plays a role in the activation of archaeal genes transcribed by RNA polymerase. Facilitates transcription initiation by enhancing TATA-box recognition by TATA-box-binding protein (Tbp), and transcription factor B (Tfb) and RNA polymerase recruitment. Not absolutely required for transcription in vitro, but particularly important in cases where Tbp or Tfb function is not optimal. It dynamically alters the nucleic acid-binding properties of RNA polymerases by stabilizing the initiation complex and destabilizing elongation complexes. Seems to translocate with the RNA polymerase following initiation and acts by binding to the non template strand of the transcription bubble in elongation complexes. This Staphylothermus marinus (strain ATCC 43588 / DSM 3639 / JCM 9404 / F1) protein is Transcription factor E.